The chain runs to 228 residues: Thymidylate kinase (228 aa).

The segment covering 1-10 (MSDSAVQRSS) has biased composition (polar residues). Residues 1 to 23 (MSDSAVQRSSGRGRFITFEGGEG) are disordered. 20 to 27 (GGEGTGKS) serves as a coordination point for ATP.

It belongs to the thymidylate kinase family.

It catalyses the reaction dTMP + ATP = dTDP + ADP. In terms of biological role, phosphorylation of dTMP to form dTDP in both de novo and salvage pathways of dTTP synthesis. This Bradyrhizobium diazoefficiens (strain JCM 10833 / BCRC 13528 / IAM 13628 / NBRC 14792 / USDA 110) protein is Thymidylate kinase.